An 85-amino-acid polypeptide reads, in one-letter code: Large ribosomal subunit protein bL27 (85 aa).

This sequence belongs to the bacterial ribosomal protein bL27 family.

The polypeptide is Large ribosomal subunit protein bL27 (Pseudomonas fluorescens (strain SBW25)).